A 251-amino-acid chain; its full sequence is Electron transfer flavoprotein subunit beta, mitochondrial (251 aa).

The protein belongs to the ETF beta-subunit/FixA family. As to quaternary structure, heterodimer of an alpha and a beta subunit. Requires FAD as cofactor. AMP is required as a cofactor.

The protein resides in the mitochondrion matrix. Its function is as follows. The electron transfer flavoprotein serves as a specific electron acceptor for several dehydrogenases, including five acyl-CoA dehydrogenases, glutaryl-CoA and sarcosine dehydrogenase. It transfers the electrons to the main mitochondrial respiratory chain via ETF-ubiquinone oxidoreductase (ETF dehydrogenase). Involved in leucine catabolism and in phytol degradation. The sequence is that of Electron transfer flavoprotein subunit beta, mitochondrial (ETFB) from Arabidopsis thaliana (Mouse-ear cress).